The chain runs to 398 residues: Acetate kinase (398 aa).

Asn-10 serves as a coordination point for Mg(2+). An ATP-binding site is contributed by Lys-17. Arg-89 lines the substrate pocket. Asp-148 functions as the Proton donor/acceptor in the catalytic mechanism. Residues His-208–Gly-212, Asp-283–Arg-285, and Gly-331–Asn-335 each bind ATP. Glu-385 contributes to the Mg(2+) binding site.

It belongs to the acetokinase family. Homodimer. Requires Mg(2+) as cofactor. It depends on Mn(2+) as a cofactor.

The protein localises to the cytoplasm. It catalyses the reaction acetate + ATP = acetyl phosphate + ADP. It participates in metabolic intermediate biosynthesis; acetyl-CoA biosynthesis; acetyl-CoA from acetate: step 1/2. Functionally, catalyzes the formation of acetyl phosphate from acetate and ATP. Can also catalyze the reverse reaction. In Histophilus somni (strain 2336) (Haemophilus somnus), this protein is Acetate kinase.